The primary structure comprises 239 residues: Small ribosomal subunit protein eS6A (239 aa).

Phosphoserine occurs at positions 235 and 236.

It belongs to the eukaryotic ribosomal protein eS6 family. In terms of assembly, component of the small ribosomal subunit (SSU). Mature yeast ribosomes consist of a small (40S) and a large (60S) subunit. The 40S small subunit contains 1 molecule of ribosomal RNA (18S rRNA) and at least 33 different proteins. The large 60S subunit contains 3 rRNA molecules (25S, 5.8S and 5S rRNA) and at least 46 different proteins. Interacts with snoRNA U3. uS11 interacts with MPP10. Component of the ribosomal small subunit (SSU) processome composed of at least 40 protein subunits and snoRNA U3. Post-translationally, phosphorylated.

The protein localises to the cytoplasm. In terms of biological role, component of the ribosome, a large ribonucleoprotein complex responsible for the synthesis of proteins in the cell. The small ribosomal subunit (SSU) binds messenger RNAs (mRNAs) and translates the encoded message by selecting cognate aminoacyl-transfer RNA (tRNA) molecules. The large subunit (LSU) contains the ribosomal catalytic site termed the peptidyl transferase center (PTC), which catalyzes the formation of peptide bonds, thereby polymerizing the amino acids delivered by tRNAs into a polypeptide chain. The nascent polypeptides leave the ribosome through a tunnel in the LSU and interact with protein factors that function in enzymatic processing, targeting, and the membrane insertion of nascent chains at the exit of the ribosomal tunnel. eS6 is involved in nucleolar processing of pre-18S ribosomal RNA and ribosome assembly. The chain is Small ribosomal subunit protein eS6A (rps601) from Schizosaccharomyces pombe (strain 972 / ATCC 24843) (Fission yeast).